A 374-amino-acid polypeptide reads, in one-letter code: Anhydro-N-acetylmuramic acid kinase (374 aa).

12–19 is an ATP binding site; the sequence is GTSLDGID.

The protein belongs to the anhydro-N-acetylmuramic acid kinase family.

The catalysed reaction is 1,6-anhydro-N-acetyl-beta-muramate + ATP + H2O = N-acetyl-D-muramate 6-phosphate + ADP + H(+). The protein operates within amino-sugar metabolism; 1,6-anhydro-N-acetylmuramate degradation. Its pathway is cell wall biogenesis; peptidoglycan recycling. Functionally, catalyzes the specific phosphorylation of 1,6-anhydro-N-acetylmuramic acid (anhMurNAc) with the simultaneous cleavage of the 1,6-anhydro ring, generating MurNAc-6-P. Is required for the utilization of anhMurNAc either imported from the medium or derived from its own cell wall murein, and thus plays a role in cell wall recycling. The protein is Anhydro-N-acetylmuramic acid kinase of Klebsiella pneumoniae subsp. pneumoniae (strain ATCC 700721 / MGH 78578).